Here is an 835-residue protein sequence, read N- to C-terminus: Disease resistance protein RPP13 (835 aa).

A coiled-coil region spans residues 25–41 (MAVKEDLEELKTELTCI). The 310-residue stretch at 144–453 (SSLRVRQLRR…AEGFIQGDEE (310 aa)) folds into the NB-ARC domain. 192–199 (GMGGLGKT) is a binding site for ATP.

This sequence belongs to the disease resistance NB-LRR family. RPP13 subfamily.

Disease resistance protein. Resistance proteins guard the plant against pathogens that contain an appropriate avirulence protein via an indirect interaction with this avirulence protein. That triggers a defense system including the hypersensitive response, which restricts the pathogen growth. In contrast to other resistance proteins, it works independently of ESD1 and NSD1 proteins and does not require the accumulation of salicylic acid, suggesting the existence of an independent signaling pathway. The specificity to avirulence proteins differs in the different cultivars. The protein is Disease resistance protein RPP13 (RPP13) of Arabidopsis thaliana (Mouse-ear cress).